The following is a 291-amino-acid chain: Prolyl 4-hydroxylase 5 (291 aa).

At methionine 1–glutamine 22 the chain is on the cytoplasmic side. The helical; Signal-anchor for type II membrane protein transmembrane segment at alanine 23–leucine 43 threads the bilayer. Residues serine 44–valine 291 are Extracellular-facing. The N-linked (GlcNAc...) asparagine glycan is linked to asparagine 51. Residues asparagine 163–valine 286 form the Fe2OG dioxygenase domain. Histidine 181 and aspartate 183 together coordinate Fe cation. Asparagine 222 is a glycosylation site (N-linked (GlcNAc...) asparagine). Histidine 267 serves as a coordination point for Fe cation. Lysine 277 contacts 2-oxoglutarate.

It belongs to the P4HA family. The cofactor is Fe(2+). L-ascorbate serves as cofactor. In terms of tissue distribution, expressed in epidermal root hair cells (trichoblasts).

It localises to the endoplasmic reticulum membrane. The protein resides in the golgi apparatus membrane. It catalyses the reaction L-prolyl-[collagen] + 2-oxoglutarate + O2 = trans-4-hydroxy-L-prolyl-[collagen] + succinate + CO2. In terms of biological role, catalyzes the post-translational formation of 4-hydroxyproline in -Xaa-Pro-Gly- sequences in proline-rich peptide sequences of plant glycoproteins and other proteins. Hydroxyprolines are important constituent of many plant cell wall glycoproteins such as extensins, hydroxyproline-rich glycoproteins, lectins and arabinogalactan proteins. Possesses high affinity for leucine-rich repeat and proline-rich extensins of root cell walls that are essential for root hair development. Hydroxyprolines define the subsequent O-glycosylation sites by arabinosyltransferases which elongate the O-arabinosides on extensins. This Arabidopsis thaliana (Mouse-ear cress) protein is Prolyl 4-hydroxylase 5.